The primary structure comprises 622 residues: Chaperone protein HscA homolog (622 aa).

This sequence belongs to the heat shock protein 70 family.

Functionally, chaperone involved in the maturation of iron-sulfur cluster-containing proteins. Has a low intrinsic ATPase activity which is markedly stimulated by HscB. This Methylobacillus flagellatus (strain ATCC 51484 / DSM 6875 / VKM B-1610 / KT) protein is Chaperone protein HscA homolog.